A 255-amino-acid chain; its full sequence is Ribonuclease PH (255 aa).

Phosphate contacts are provided by residues arginine 86 and 124–126 (GTR).

It belongs to the RNase PH family. As to quaternary structure, homohexameric ring arranged as a trimer of dimers.

The enzyme catalyses tRNA(n+1) + phosphate = tRNA(n) + a ribonucleoside 5'-diphosphate. In terms of biological role, phosphorolytic 3'-5' exoribonuclease that plays an important role in tRNA 3'-end maturation. Removes nucleotide residues following the 3'-CCA terminus of tRNAs; can also add nucleotides to the ends of RNA molecules by using nucleoside diphosphates as substrates, but this may not be physiologically important. Probably plays a role in initiation of 16S rRNA degradation (leading to ribosome degradation) during starvation. This is Ribonuclease PH from Geobacillus thermodenitrificans (strain NG80-2).